A 475-amino-acid polypeptide reads, in one-letter code: UDP-N-acetylmuramate--L-alanine ligase (475 aa).

119–125 provides a ligand contact to ATP; sequence GTHGKTT.

The protein belongs to the MurCDEF family.

Its subcellular location is the cytoplasm. The enzyme catalyses UDP-N-acetyl-alpha-D-muramate + L-alanine + ATP = UDP-N-acetyl-alpha-D-muramoyl-L-alanine + ADP + phosphate + H(+). The protein operates within cell wall biogenesis; peptidoglycan biosynthesis. Functionally, cell wall formation. In Wigglesworthia glossinidia brevipalpis, this protein is UDP-N-acetylmuramate--L-alanine ligase.